The primary structure comprises 339 residues: D-erythrose-4-phosphate dehydrogenase (339 aa).

11–12 contributes to the NAD(+) binding site; it reads RI. Substrate contacts are provided by residues 153 to 155, Arg-199, 212 to 213, and Arg-235; these read SCT and TK. Cys-154 serves as the catalytic Nucleophile. NAD(+) is bound at residue Asn-317.

Belongs to the glyceraldehyde-3-phosphate dehydrogenase family. Epd subfamily. As to quaternary structure, homotetramer.

The protein resides in the cytoplasm. It carries out the reaction D-erythrose 4-phosphate + NAD(+) + H2O = 4-phospho-D-erythronate + NADH + 2 H(+). The protein operates within cofactor biosynthesis; pyridoxine 5'-phosphate biosynthesis; pyridoxine 5'-phosphate from D-erythrose 4-phosphate: step 1/5. In terms of biological role, catalyzes the NAD-dependent conversion of D-erythrose 4-phosphate to 4-phosphoerythronate. The chain is D-erythrose-4-phosphate dehydrogenase from Shewanella pealeana (strain ATCC 700345 / ANG-SQ1).